The sequence spans 407 residues: Imidazolonepropionase (407 aa).

Histidine 68 and histidine 70 together coordinate Fe(3+). 2 residues coordinate Zn(2+): histidine 68 and histidine 70. Arginine 77, tyrosine 140, and histidine 173 together coordinate 4-imidazolone-5-propanoate. Position 140 (tyrosine 140) interacts with N-formimidoyl-L-glutamate. Histidine 238 is a Fe(3+) binding site. Residue histidine 238 participates in Zn(2+) binding. Glutamine 241 serves as a coordination point for 4-imidazolone-5-propanoate. Residue aspartate 313 participates in Fe(3+) binding. Position 313 (aspartate 313) interacts with Zn(2+). The N-formimidoyl-L-glutamate site is built by asparagine 315 and glycine 317. Threonine 318 serves as a coordination point for 4-imidazolone-5-propanoate.

This sequence belongs to the metallo-dependent hydrolases superfamily. HutI family. The cofactor is Zn(2+). Fe(3+) is required as a cofactor.

It is found in the cytoplasm. It catalyses the reaction 4-imidazolone-5-propanoate + H2O = N-formimidoyl-L-glutamate. Its pathway is amino-acid degradation; L-histidine degradation into L-glutamate; N-formimidoyl-L-glutamate from L-histidine: step 3/3. Catalyzes the hydrolytic cleavage of the carbon-nitrogen bond in imidazolone-5-propanoate to yield N-formimidoyl-L-glutamate. It is the third step in the universal histidine degradation pathway. This chain is Imidazolonepropionase, found in Burkholderia orbicola (strain MC0-3).